The sequence spans 232 residues: 5'-methylthioadenosine/S-adenosylhomocysteine nucleosidase (232 aa).

Catalysis depends on glutamate 14, which acts as the Proton acceptor. Substrate-binding positions include glycine 80, valine 154, and 175 to 176 (ME). The active-site Proton donor is the aspartate 199.

The protein belongs to the PNP/UDP phosphorylase family. MtnN subfamily.

It carries out the reaction S-adenosyl-L-homocysteine + H2O = S-(5-deoxy-D-ribos-5-yl)-L-homocysteine + adenine. The enzyme catalyses S-methyl-5'-thioadenosine + H2O = 5-(methylsulfanyl)-D-ribose + adenine. The catalysed reaction is 5'-deoxyadenosine + H2O = 5-deoxy-D-ribose + adenine. The protein operates within amino-acid biosynthesis; L-methionine biosynthesis via salvage pathway; S-methyl-5-thio-alpha-D-ribose 1-phosphate from S-methyl-5'-thioadenosine (hydrolase route): step 1/2. Its function is as follows. Catalyzes the irreversible cleavage of the glycosidic bond in both 5'-methylthioadenosine (MTA) and S-adenosylhomocysteine (SAH/AdoHcy) to adenine and the corresponding thioribose, 5'-methylthioribose and S-ribosylhomocysteine, respectively. Also cleaves 5'-deoxyadenosine, a toxic by-product of radical S-adenosylmethionine (SAM) enzymes, into 5-deoxyribose and adenine. The polypeptide is 5'-methylthioadenosine/S-adenosylhomocysteine nucleosidase (Actinobacillus pleuropneumoniae serotype 3 (strain JL03)).